Consider the following 513-residue polypeptide: 2,3-bisphosphoglycerate-independent phosphoglycerate mutase (513 aa).

Residues Asp13 and Ser63 each contribute to the Mn(2+) site. Catalysis depends on Ser63, which acts as the Phosphoserine intermediate. Substrate contacts are provided by residues His124, 154–155, Arg186, Arg192, 262–265, and Lys335; these read RD and RADR. Mn(2+)-binding residues include Asp403, His407, Asp444, His445, and His463.

It belongs to the BPG-independent phosphoglycerate mutase family. As to quaternary structure, monomer. Requires Mn(2+) as cofactor.

It catalyses the reaction (2R)-2-phosphoglycerate = (2R)-3-phosphoglycerate. The protein operates within carbohydrate degradation; glycolysis; pyruvate from D-glyceraldehyde 3-phosphate: step 3/5. In terms of biological role, catalyzes the interconversion of 2-phosphoglycerate and 3-phosphoglycerate. In Myxococcus xanthus (strain DK1622), this protein is 2,3-bisphosphoglycerate-independent phosphoglycerate mutase.